The following is a 442-amino-acid chain: NALCN channel auxiliary factor 2 (442 aa).

A helical membrane pass occupies residues 42-62; that stretch reads LASLLFFTVLLSNHLWLVSAG. 5 N-linked (GlcNAc...) asparagine glycosylation sites follow: asparagine 77, asparagine 100, asparagine 171, asparagine 279, and asparagine 354. The chain crosses the membrane as a helical span at residues 406–426; the sequence is CVLVLMLLHTMASFSVVQNGV.

This sequence belongs to the NALF family.

It localises to the membrane. Its function is as follows. Probable component of the NALCN channel complex, a channel that regulates the resting membrane potential and controls neuronal excitability. This chain is NALCN channel auxiliary factor 2 (nalf2), found in Xenopus tropicalis (Western clawed frog).